The chain runs to 320 residues: Ferrochelatase (320 aa).

Fe cation is bound by residues His194 and Glu275.

Belongs to the ferrochelatase family.

The protein localises to the cytoplasm. The catalysed reaction is heme b + 2 H(+) = protoporphyrin IX + Fe(2+). It participates in porphyrin-containing compound metabolism; protoheme biosynthesis; protoheme from protoporphyrin-IX: step 1/1. Its function is as follows. Catalyzes the ferrous insertion into protoporphyrin IX. The protein is Ferrochelatase of Vibrio parahaemolyticus serotype O3:K6 (strain RIMD 2210633).